Here is a 414-residue protein sequence, read N- to C-terminus: O-methyltransferase sirM (414 aa).

D270 serves as a coordination point for S-adenosyl-L-methionine. H321 (proton acceptor) is an active-site residue.

It belongs to the class I-like SAM-binding methyltransferase superfamily. Cation-independent O-methyltransferase family. COMT subfamily.

It participates in mycotoxin biosynthesis. Functionally, O-methyltransferase; part of the gene cluster that mediates the biosynthesis of sirodesmin PL, an epipolythiodioxopiperazine (ETP) characterized by a disulfide bridged cyclic dipeptide and that acts as a phytotoxin which is involved in the blackleg didease of canola. SirD catalyzes the O-prenylation of L-tyrosine (L-Tyr) in the presence of dimethylallyl diphosphate (DMAPP) to yield 4-O-dimethylallyl-L-Tyr, and therefore represents probably the first pathway-specific enzyme in the biosynthesis of sirodesmin PL. 4-O-dimethylallyl-L-Tyr, then undergoes condensation with L-Ser in a reaction catalyzed by the non-ribosomal peptide synthase sirP to form the diketopiperazine (DKP) backbone. Further bishydroxylation of the DKP performed by the cytochrome P450 monooxygenase sirC leads to the production of the intermediate phomamide. This step is essential to form the reactive thiol group required for toxicity of sirodesmin PL. The next steps of sirodesmin biosynthesis are not well understood yet, but some predictions could be made from intermediate compounds identification. Phomamide is converted into phomalizarine via oxidation, probably by sirT. Further oxidation, methylation (by sirM or sirN) and reduction steps convert phomalizarine to deacetyl sirodesmin. Finally, acetyltransferase sirH probably acetylates deacetyl sirodesmin to produce sirodesmin PL. This is O-methyltransferase sirM from Leptosphaeria maculans (Blackleg fungus).